A 122-amino-acid polypeptide reads, in one-letter code: Large ribosomal subunit protein uL14 (122 aa).

It belongs to the universal ribosomal protein uL14 family. As to quaternary structure, part of the 50S ribosomal subunit. Forms a cluster with proteins L3 and L19. In the 70S ribosome, L14 and L19 interact and together make contacts with the 16S rRNA in bridges B5 and B8.

Binds to 23S rRNA. Forms part of two intersubunit bridges in the 70S ribosome. This is Large ribosomal subunit protein uL14 from Exiguobacterium sp. (strain ATCC BAA-1283 / AT1b).